The chain runs to 490 residues: tRNA-2-methylthio-N(6)-dimethylallyladenosine synthase (490 aa).

One can recognise an MTTase N-terminal domain in the interval 37–154 (KKVYIATQGC…LPELYDKSTT (118 aa)). Positions 46, 83, 117, 198, 202, and 205 each coordinate [4Fe-4S] cluster. The Radical SAM core domain maps to 184-416 (KVEGYRAFVS…QKVIRDSTLK (233 aa)). Positions 419-487 (EEMVGKTLRV…PHMVRGELVD (69 aa)) constitute a TRAM domain.

Belongs to the methylthiotransferase family. MiaB subfamily. As to quaternary structure, monomer. [4Fe-4S] cluster serves as cofactor.

It localises to the cytoplasm. The enzyme catalyses N(6)-dimethylallyladenosine(37) in tRNA + (sulfur carrier)-SH + AH2 + 2 S-adenosyl-L-methionine = 2-methylsulfanyl-N(6)-dimethylallyladenosine(37) in tRNA + (sulfur carrier)-H + 5'-deoxyadenosine + L-methionine + A + S-adenosyl-L-homocysteine + 2 H(+). Catalyzes the methylthiolation of N6-(dimethylallyl)adenosine (i(6)A), leading to the formation of 2-methylthio-N6-(dimethylallyl)adenosine (ms(2)i(6)A) at position 37 in tRNAs that read codons beginning with uridine. The protein is tRNA-2-methylthio-N(6)-dimethylallyladenosine synthase of Psychrobacter sp. (strain PRwf-1).